The sequence spans 125 residues: MARVTVEDCIDKVHNRFDLILLAAQRARQISGGAELTLDRDRDKNPVVALREIADELITPVQLREALLNDLQQVHLDDDDVPDEVGSLSASAEALRLTAETPARNQTSSRRAAAAAAAAAAVDYD.

This sequence belongs to the RNA polymerase subunit omega family. In terms of assembly, the RNAP catalytic core consists of 2 alpha, 1 beta, 1 beta' and 1 omega subunit. When a sigma factor is associated with the core the holoenzyme is formed, which can initiate transcription.

The enzyme catalyses RNA(n) + a ribonucleoside 5'-triphosphate = RNA(n+1) + diphosphate. Its function is as follows. Promotes RNA polymerase assembly. Latches the N- and C-terminal regions of the beta' subunit thereby facilitating its interaction with the beta and alpha subunits. The sequence is that of DNA-directed RNA polymerase subunit omega from Zymomonas mobilis subsp. mobilis (strain ATCC 31821 / ZM4 / CP4).